A 183-amino-acid polypeptide reads, in one-letter code: uncharacterized protein (183 aa).

A run of 4 helical transmembrane segments spans residues Phe-26–Tyr-48, Leu-72–Ile-91, Ile-104–Phe-121, and Phe-125–Leu-147.

Its subcellular location is the cell membrane. This is an uncharacterized protein from Aquifex aeolicus (strain VF5).